Consider the following 148-residue polypeptide: Nodulation protein NolJ (148 aa).

Residues 66-78 are compositionally biased toward acidic residues; that stretch reads ADEAMEETEEDAD. Disordered regions lie at residues 66–93 and 124–148; these read ADEA…VSDG and AAKG…RGYG. Positions 124-136 are enriched in low complexity; the sequence is AAKGAGAAVPGPN.

Its function is as follows. Involved in efficiency of soybean nodulation and in nodulation delay. This is Nodulation protein NolJ (nolJ) from Rhizobium fredii (Sinorhizobium fredii).